Here is a 129-residue protein sequence, read N- to C-terminus: Fluoride-specific ion channel FluC 2 (129 aa).

The next 4 helical transmembrane spans lie at 4–24 (LDVMWVCLGGGVGSLGRWWIG), 39–59 (TFLINISGAFVIGYLSVLFGV), 65–85 (YGTMLNAGVLTGILGGYTTFS), and 104–124 (VFYLVASVLSGLFAAWLGAML). Na(+) is bound by residues Gly79 and Thr82.

Belongs to the fluoride channel Fluc/FEX (TC 1.A.43) family.

It localises to the cell inner membrane. The enzyme catalyses fluoride(in) = fluoride(out). Its activity is regulated as follows. Na(+) is not transported, but it plays an essential structural role and its presence is essential for fluoride channel function. Its function is as follows. Fluoride-specific ion channel. Important for reducing fluoride concentration in the cell, thus reducing its toxicity. In Brucella abortus biovar 1 (strain 9-941), this protein is Fluoride-specific ion channel FluC 2.